We begin with the raw amino-acid sequence, 347 residues long: GMP reductase (347 aa).

Position 108–131 (Thr-108–Ala-131) interacts with NADP(+). Gly-181 and Gly-183 together coordinate K(+). Cys-186 functions as the Thioimidate intermediate in the catalytic mechanism. Residue Ile-216–Val-239 coordinates NADP(+).

Belongs to the IMPDH/GMPR family. GuaC type 1 subfamily. As to quaternary structure, homotetramer.

It carries out the reaction IMP + NH4(+) + NADP(+) = GMP + NADPH + 2 H(+). Catalyzes the irreversible NADPH-dependent deamination of GMP to IMP. It functions in the conversion of nucleobase, nucleoside and nucleotide derivatives of G to A nucleotides, and in maintaining the intracellular balance of A and G nucleotides. The polypeptide is GMP reductase (Shewanella pealeana (strain ATCC 700345 / ANG-SQ1)).